Here is a 402-residue protein sequence, read N- to C-terminus: Phosphoglycerate kinase (402 aa).

Residues 24 to 26, arginine 40, 63 to 66, arginine 122, and arginine 155 each bind substrate; these read DFN and HFGR. ATP-binding positions include lysine 206, glycine 297, glutamate 328, and 357 to 360; that span reads GGDS.

This sequence belongs to the phosphoglycerate kinase family. Monomer.

The protein localises to the cytoplasm. The catalysed reaction is (2R)-3-phosphoglycerate + ATP = (2R)-3-phospho-glyceroyl phosphate + ADP. Its pathway is carbohydrate degradation; glycolysis; pyruvate from D-glyceraldehyde 3-phosphate: step 2/5. This chain is Phosphoglycerate kinase, found in Synechococcus sp. (strain CC9311).